The chain runs to 402 residues: Argininosuccinate synthase (402 aa).

Residues 9–17 (AYSGGLDTS) and Ala36 each bind ATP. Residues Tyr87 and Ser92 each coordinate L-citrulline. Gly117 contributes to the ATP binding site. L-aspartate contacts are provided by Thr119, Asn123, and Asp124. L-citrulline is bound at residue Asn123. L-citrulline contacts are provided by Arg127, Ser176, Ser185, Glu261, and Tyr273.

This sequence belongs to the argininosuccinate synthase family. Type 1 subfamily. Homotetramer.

It localises to the cytoplasm. The catalysed reaction is L-citrulline + L-aspartate + ATP = 2-(N(omega)-L-arginino)succinate + AMP + diphosphate + H(+). It functions in the pathway amino-acid biosynthesis; L-arginine biosynthesis; L-arginine from L-ornithine and carbamoyl phosphate: step 2/3. The protein is Argininosuccinate synthase of Deinococcus radiodurans (strain ATCC 13939 / DSM 20539 / JCM 16871 / CCUG 27074 / LMG 4051 / NBRC 15346 / NCIMB 9279 / VKM B-1422 / R1).